The primary structure comprises 403 residues: Riboflavin biosynthesis protein RibBA (403 aa).

Positions 1–204 are DHBP synthase; that stretch reads MKNKVFASIG…IGELVNYRRR (204 aa). D-ribulose 5-phosphate contacts are provided by residues 30–31, aspartate 35, 143–147, and glutamate 167; these read RE and RTGHT. Glutamate 31 serves as a coordination point for Mg(2+). A Mg(2+)-binding site is contributed by histidine 146. The interval 205–403 is GTP cyclohydrolase II; sequence TEKFISEIVN…EKMGHMLKKV (199 aa). Residue 255–259 coordinates GTP; sequence RVHSS. Zn(2+)-binding residues include cysteine 260, cysteine 271, and cysteine 273. GTP is bound by residues glutamine 276, 298–300, and threonine 320; that span reads EGR. Residue aspartate 332 is the Proton acceptor; for GTP cyclohydrolase activity of the active site. Catalysis depends on arginine 334, which acts as the Nucleophile; for GTP cyclohydrolase activity. GTP is bound by residues threonine 355 and lysine 360.

It in the N-terminal section; belongs to the DHBP synthase family. The protein in the C-terminal section; belongs to the GTP cyclohydrolase II family. Mg(2+) serves as cofactor. The cofactor is Mn(2+). Requires Zn(2+) as cofactor.

The enzyme catalyses D-ribulose 5-phosphate = (2S)-2-hydroxy-3-oxobutyl phosphate + formate + H(+). The catalysed reaction is GTP + 4 H2O = 2,5-diamino-6-hydroxy-4-(5-phosphoribosylamino)-pyrimidine + formate + 2 phosphate + 3 H(+). Its pathway is cofactor biosynthesis; riboflavin biosynthesis; 2-hydroxy-3-oxobutyl phosphate from D-ribulose 5-phosphate: step 1/1. It participates in cofactor biosynthesis; riboflavin biosynthesis; 5-amino-6-(D-ribitylamino)uracil from GTP: step 1/4. In terms of biological role, catalyzes the conversion of D-ribulose 5-phosphate to formate and 3,4-dihydroxy-2-butanone 4-phosphate. Functionally, catalyzes the conversion of GTP to 2,5-diamino-6-ribosylamino-4(3H)-pyrimidinone 5'-phosphate (DARP), formate and pyrophosphate. In Endomicrobium trichonymphae, this protein is Riboflavin biosynthesis protein RibBA.